The chain runs to 432 residues: Glutamyl-tRNA reductase (432 aa).

Substrate contacts are provided by residues 49-52 (TCNR), serine 109, 114-116 (EGQ), and glutamine 120. The Nucleophile role is filled by cysteine 50. 189–194 (GAGKMS) contacts NADP(+).

The protein belongs to the glutamyl-tRNA reductase family. Homodimer.

It is found in the plastid. It localises to the cyanelle. The catalysed reaction is (S)-4-amino-5-oxopentanoate + tRNA(Glu) + NADP(+) = L-glutamyl-tRNA(Glu) + NADPH + H(+). It functions in the pathway porphyrin-containing compound metabolism; protoporphyrin-IX biosynthesis; 5-aminolevulinate from L-glutamyl-tRNA(Glu): step 1/2. Its pathway is porphyrin-containing compound metabolism; chlorophyll biosynthesis. In terms of biological role, catalyzes the NADPH-dependent reduction of glutamyl-tRNA(Glu) to glutamate 1-semialdehyde (GSA). This Cyanophora paradoxa protein is Glutamyl-tRNA reductase.